Reading from the N-terminus, the 372-residue chain is MTGNTFGNAFRITTFGESHGPGLGVVIDGCPAGLPLTEADVQAELDKRKPGQSEVTTQRKEADMVEILSGVFEGLTTGTPIAMLVRNADARSAAYENIRNIARPGHADFGYMEKYGMRDYRGGGRSSGRETLSRVAGGAVAKKLLSLYGVEVHAHTVAIGNVRAKPATIEEIKANVWKNPVRCADLSAADAMLREVSAAREASDSVGGIVEIVATGVPAGVGTPAFDKLDACLAYALMGIGGVKAVEIGAGIASAGMRGSEMNDEFCTEDGKVRTKTNRCGGILGGISTGMPIVCRAAIKPTPSISRPQRTVNLETGAETIIEITGRHDPSIVPRAVPVAEAMVALVIVDQMISGGLINPVSAGAVDASRNR.

Arg48 serves as a coordination point for NADP(+). Residues 125-127, Gly285, 300-304, and Arg327 each bind FMN; these read RSS and KPTPS.

This sequence belongs to the chorismate synthase family. FMNH2 serves as cofactor.

The enzyme catalyses 5-O-(1-carboxyvinyl)-3-phosphoshikimate = chorismate + phosphate. Its pathway is metabolic intermediate biosynthesis; chorismate biosynthesis; chorismate from D-erythrose 4-phosphate and phosphoenolpyruvate: step 7/7. Functionally, catalyzes the anti-1,4-elimination of the C-3 phosphate and the C-6 proR hydrogen from 5-enolpyruvylshikimate-3-phosphate (EPSP) to yield chorismate, which is the branch point compound that serves as the starting substrate for the three terminal pathways of aromatic amino acid biosynthesis. This reaction introduces a second double bond into the aromatic ring system. The protein is Chorismate synthase of Methanocella arvoryzae (strain DSM 22066 / NBRC 105507 / MRE50).